We begin with the raw amino-acid sequence, 111 residues long: Large ribosomal subunit protein eL33x (111 aa).

The protein belongs to the eukaryotic ribosomal protein eL33 family.

The polypeptide is Large ribosomal subunit protein eL33x (RPL35AD) (Arabidopsis thaliana (Mouse-ear cress)).